A 217-amino-acid polypeptide reads, in one-letter code: Pyridoxine/pyridoxamine 5'-phosphate oxidase (217 aa).

Substrate contacts are provided by residues 13-16 (RRDY) and K71. Residues 66 to 71 (RIVLLK), 81 to 82 (YT), K88, and Q110 each bind FMN. Residues Y128, R132, and S136 each coordinate substrate. Residues 145–146 (QS) and W190 contribute to the FMN site. 196–198 (RLH) lines the substrate pocket. FMN is bound at residue R200.

Belongs to the pyridoxamine 5'-phosphate oxidase family. In terms of assembly, homodimer. FMN serves as cofactor.

It catalyses the reaction pyridoxamine 5'-phosphate + O2 + H2O = pyridoxal 5'-phosphate + H2O2 + NH4(+). The catalysed reaction is pyridoxine 5'-phosphate + O2 = pyridoxal 5'-phosphate + H2O2. It participates in cofactor metabolism; pyridoxal 5'-phosphate salvage; pyridoxal 5'-phosphate from pyridoxamine 5'-phosphate: step 1/1. Its pathway is cofactor metabolism; pyridoxal 5'-phosphate salvage; pyridoxal 5'-phosphate from pyridoxine 5'-phosphate: step 1/1. In terms of biological role, catalyzes the oxidation of either pyridoxine 5'-phosphate (PNP) or pyridoxamine 5'-phosphate (PMP) into pyridoxal 5'-phosphate (PLP). This is Pyridoxine/pyridoxamine 5'-phosphate oxidase from Edwardsiella ictaluri (strain 93-146).